Reading from the N-terminus, the 237-residue chain is Transcriptional regulatory protein YvrH (237 aa).

Residues 5 to 119 enclose the Response regulatory domain; sequence SILIVDDEKA…ELAARIRAHL (115 aa). At Asp-55 the chain carries 4-aspartylphosphate. The ompR/PhoB-type DNA-binding region spans 131-230; sequence NQTYTYDYFT…VRGLGYRFIP (100 aa).

Post-translationally, phosphorylated by YvrG.

The protein resides in the cytoplasm. Its function is as follows. Member of the two-component regulatory system YvrG/YvrH that positively regulates 7 transcriptional units (wprA, wapA-yxxG, dltABCDE, sunA, sunT-bdbA-yolJ-bdbB, sigO-rsoA, and sigX-rsiX), and negatively regulates the lytABC operon. This is Transcriptional regulatory protein YvrH (yvrH) from Bacillus subtilis (strain 168).